The chain runs to 497 residues: Glycerol kinase (497 aa).

Threonine 12 contacts ADP. ATP contacts are provided by threonine 12, threonine 13, and serine 14. Threonine 12 contributes to the sn-glycerol 3-phosphate binding site. Arginine 16 lines the ADP pocket. Positions 82, 83, 134, and 243 each coordinate sn-glycerol 3-phosphate. Glycerol is bound by residues arginine 82, glutamate 83, tyrosine 134, aspartate 243, and glutamine 244. ADP contacts are provided by threonine 265 and glycine 308. ATP is bound by residues threonine 265, glycine 308, glutamine 312, and glycine 411. Glycine 411 is an ADP binding site.

Belongs to the FGGY kinase family.

It catalyses the reaction glycerol + ATP = sn-glycerol 3-phosphate + ADP + H(+). It participates in polyol metabolism; glycerol degradation via glycerol kinase pathway; sn-glycerol 3-phosphate from glycerol: step 1/1. Inhibited by fructose 1,6-bisphosphate (FBP). Its function is as follows. Key enzyme in the regulation of glycerol uptake and metabolism. Catalyzes the phosphorylation of glycerol to yield sn-glycerol 3-phosphate. The chain is Glycerol kinase from Rhizobium meliloti (strain 1021) (Ensifer meliloti).